The chain runs to 591 residues: MGFNIPWNGTQAEYHVTHCFLPSDKIDLISFSTSTSQFCNGRPFKFVPAALPSILPQAKPITTDQTQAPPPALAQPSLSFTQGLLVGQLSVVLLIGAFIKFFIFGEAPPPPSRSGLYNRTSSHRRSYSINAISTDFSPRTLREKPSTSNILRPVPSSSTNTRSILRKTYYSATPTNPTSKHGRSRVHHSSHQPESLDWFNVLIAQTIAQYRQTAYILKDSPTSSILASLSEALNNPEKKPSFIDTIKVTDISLGEEFPIFSNCRVIAVEDPNSDGGRLQALMDVDLSDDNLSLAVETSLLLNYPKPFSAVLPVALAVSVVRFSGTLCISFVPGPGTSDQTMGPSASPPNQSTSTETASINDQTSEGQSTQRHTFHQHKPTNSTPTAATADDAHTKHAHGIPKTSLAFSFLPDYRLDLSVRSLIGSRSRLQDVPKVAQLVEARMQAWFEERVVEPRVQVVGLPNIWPRMGRTGVRGSQEEAEARAGVGSVPVDIPGTAGGDGMRGRGGGGGGGGLRGNSSGRGMGYDGLRYRPNAHGDGGTGVVQGQGAGGIFCEAGPQNQNRGGDDGEGPGRRSDERFAMPGSMPDSVAVT.

The Lumenal segment spans residues methionine 1–glycine 83. A helical membrane pass occupies residues leucine 84–phenylalanine 104. The Cytoplasmic portion of the chain corresponds to glycine 105–threonine 591. Disordered stretches follow at residues proline 138 to threonine 159, tyrosine 170 to serine 189, proline 334 to histidine 398, and glutamate 479 to threonine 591. 2 stretches are compositionally biased toward polar residues: residues serine 146–threonine 159 and tyrosine 170–serine 179. Residues lysine 180–serine 189 are compositionally biased toward basic residues. Residues glutamine 192–proline 462 form the SMP-LTD domain. Positions threonine 336–arginine 371 are enriched in polar residues. Residues proline 379–alanine 389 show a composition bias toward low complexity. Composition is skewed to gly residues over residues threonine 496–tyrosine 525 and glycine 536–glycine 550. Residues glycine 563–phenylalanine 578 show a composition bias toward basic and acidic residues.

The protein belongs to the MMM1 family. In terms of assembly, homodimer. Component of the ER-mitochondria encounter structure (ERMES) or MDM complex, composed of MMM1, MDM10, MDM12 and MDM34. An MMM1 homodimer associates with one molecule of MDM12 on each side in a pairwise head-to-tail manner, and the SMP-LTD domains of MMM1 and MDM12 generate a continuous hydrophobic tunnel for phospholipid trafficking.

The protein resides in the endoplasmic reticulum membrane. In terms of biological role, component of the ERMES/MDM complex, which serves as a molecular tether to connect the endoplasmic reticulum (ER) and mitochondria. Components of this complex are involved in the control of mitochondrial shape and protein biogenesis, and function in nonvesicular lipid trafficking between the ER and mitochondria. The MDM12-MMM1 subcomplex functions in the major beta-barrel assembly pathway that is responsible for biogenesis of all outer membrane beta-barrel proteins, and acts in a late step after the SAM complex. The MDM10-MDM12-MMM1 subcomplex further acts in the TOM40-specific pathway after the action of the MDM12-MMM1 complex. Essential for establishing and maintaining the structure of mitochondria and maintenance of mtDNA nucleoids. This is Maintenance of mitochondrial morphology protein 1 from Ajellomyces capsulatus (strain G186AR / H82 / ATCC MYA-2454 / RMSCC 2432) (Darling's disease fungus).